The following is a 563-amino-acid chain: MGKPFTLSLSSLCLLLLSSACFAISSSKLNECQLNNLNALEPDHRVESEGGLIQTWNSQHPELKCAGVTVSKLTLNRNGLHLPSYSPYPRMIIIAQGKGALGVAIPGCPETFEEPQEQSNRRGSRSQKQQLQDSHQKIRHFNEGDVLVIPPGVPYWTYNTGDEPVVAISLLDTSNFNNQLDQTPRVFYLAGNPDIEYPETMQQQQQQKSHGGRKQGQHQQEEEEEGGSVLSGFSKHFLAQSFNTNEDIAEKLQSPDDERKQIVTVEGGLSVISPKWQEQQDEDEDEDEDDEDEQIPSHPPRRPSHGKREQDEDEDEDEDKPRPSRPSQGKREQDQDQDEDEDEDEDQPRKSREWRSKKTQPRRPRQEEPRERGCETRNGVEENICTLKLHENIARPSRADFYNPKAGRISTLNSLTLPALRQFQLSAQYVVLYKNGIYSPHWNLNANSVIYVTRGQGKVRVVNCQGNAVFDGELRRGQLLVVPQNFVVAEQAGEQGFEYIVFKTHHNAVTSYLKDVFRAIPSEVLAHSYNLRQSQVSELKYEGNWGPLVNPESQQGSPRVKVA.

An N-terminal signal peptide occupies residues 1 to 23 (MGKPFTLSLSSLCLLLLSSACFA). 2 disulfides stabilise this stretch: C32–C65 and C108–C385. The 214-residue stretch at 37–250 (LNALEPDHRV…SFNTNEDIAE (214 aa)) folds into the Cupin type-1 1 domain. 3 disordered regions span residues 108–136 (CPETFEEPQEQSNRRGSRSQKQQLQDSHQ), 199–228 (ETMQQQQQQKSHGGRKQGQHQQEEEEEGGS), and 266–375 (EGGL…RGCE). Composition is skewed to acidic residues over residues 279 to 294 (QQDEDEDEDEDDEDEQ) and 335 to 346 (QDQDEDEDEDED). Basic and acidic residues-rich tracts occupy residues 347-356 (QPRKSREWRS) and 364-375 (PRQEEPRERGCE). The region spanning 391–537 (ENIARPSRAD…SYNLRQSQVS (147 aa)) is the Cupin type-1 2 domain. The short motif at 551–563 (PESQQGSPRVKVA) is the Vacuolar targeting signal element.

This sequence belongs to the 11S seed storage protein (globulins) family. In terms of assembly, hexamer; each subunit is composed of an acidic and a basic chain derived from a single precursor and linked by a disulfide bond. In terms of processing, during soybean germination, seed storage proteins are hydrolyzed by protease/26S proteasome. As to expression, exclusively in seeds during embryogenesis.

Its subcellular location is the endoplasmic reticulum. It localises to the protein storage vacuole. Functionally, glycinin is the major seed storage protein of soybean. Glycinin basic peptides (GBPs), and, to a lower extent, glycinin exhibit antibacterial activity against Gram-negative and Gram-positive bacteria (e.g. L.monocytogenes, B.subtilis, E.coli and S.enteritidis) by forming pores and aggregating in transmembranes, leading to membrane permeability and, eventually, cell death. The sequence is that of Glycinin G4 from Glycine max (Soybean).